Here is a 517-residue protein sequence, read N- to C-terminus: Crotonobetaine/carnitine--CoA ligase (517 aa).

This sequence belongs to the ATP-dependent AMP-binding enzyme family.

The enzyme catalyses 4-(trimethylamino)butanoate + ATP + CoA = 4-(trimethylamino)butanoyl-CoA + AMP + diphosphate. The catalysed reaction is crotonobetaine + ATP + CoA = crotonobetainyl-CoA + AMP + diphosphate. It carries out the reaction (R)-carnitine + ATP + CoA = (R)-carnitinyl-CoA + AMP + diphosphate. Its pathway is amine and polyamine metabolism; carnitine metabolism. Catalyzes the transfer of CoA to carnitine, generating the initial carnitinyl-CoA needed for the CaiB reaction cycle. Also has activity toward crotonobetaine and gamma-butyrobetaine. In Salmonella paratyphi C (strain RKS4594), this protein is Crotonobetaine/carnitine--CoA ligase.